Consider the following 245-residue polypeptide: Biosynthetic peptidoglycan transglycosylase (245 aa).

The helical transmembrane segment at 13–35 (VGLARWIVYAGSVFAGAWLATQL) threads the bilayer.

Belongs to the glycosyltransferase 51 family.

It is found in the cell inner membrane. The catalysed reaction is [GlcNAc-(1-&gt;4)-Mur2Ac(oyl-L-Ala-gamma-D-Glu-L-Lys-D-Ala-D-Ala)](n)-di-trans,octa-cis-undecaprenyl diphosphate + beta-D-GlcNAc-(1-&gt;4)-Mur2Ac(oyl-L-Ala-gamma-D-Glu-L-Lys-D-Ala-D-Ala)-di-trans,octa-cis-undecaprenyl diphosphate = [GlcNAc-(1-&gt;4)-Mur2Ac(oyl-L-Ala-gamma-D-Glu-L-Lys-D-Ala-D-Ala)](n+1)-di-trans,octa-cis-undecaprenyl diphosphate + di-trans,octa-cis-undecaprenyl diphosphate + H(+). It functions in the pathway cell wall biogenesis; peptidoglycan biosynthesis. In terms of biological role, peptidoglycan polymerase that catalyzes glycan chain elongation from lipid-linked precursors. The sequence is that of Biosynthetic peptidoglycan transglycosylase from Burkholderia vietnamiensis (strain G4 / LMG 22486) (Burkholderia cepacia (strain R1808)).